The chain runs to 121 residues: Small ribosomal subunit protein uS13 (121 aa).

Residues 91 to 121 (HKRGLPVRGQRTRTNARTRKGPRRAAASLKK) are disordered.

Belongs to the universal ribosomal protein uS13 family. As to quaternary structure, part of the 30S ribosomal subunit. Forms a loose heterodimer with protein S19. Forms two bridges to the 50S subunit in the 70S ribosome.

Functionally, located at the top of the head of the 30S subunit, it contacts several helices of the 16S rRNA. In the 70S ribosome it contacts the 23S rRNA (bridge B1a) and protein L5 of the 50S subunit (bridge B1b), connecting the 2 subunits; these bridges are implicated in subunit movement. Contacts the tRNAs in the A and P-sites. The protein is Small ribosomal subunit protein uS13 of Bordetella petrii (strain ATCC BAA-461 / DSM 12804 / CCUG 43448).